Consider the following 184-residue polypeptide: ATP synthase subunit b, chloroplastic (184 aa).

Residues 4–24 traverse the membrane as a helical segment; the sequence is IINLVIFSGYWPIAGNFGLNT.

This sequence belongs to the ATPase B chain family. As to quaternary structure, F-type ATPases have 2 components, F(1) - the catalytic core - and F(0) - the membrane proton channel. F(1) has five subunits: alpha(3), beta(3), gamma(1), delta(1), epsilon(1). F(0) has four main subunits: a(1), b(1), b'(1) and c(10-14). The alpha and beta chains form an alternating ring which encloses part of the gamma chain. F(1) is attached to F(0) by a central stalk formed by the gamma and epsilon chains, while a peripheral stalk is formed by the delta, b and b' chains.

The protein resides in the plastid. Its subcellular location is the chloroplast thylakoid membrane. Its function is as follows. F(1)F(0) ATP synthase produces ATP from ADP in the presence of a proton or sodium gradient. F-type ATPases consist of two structural domains, F(1) containing the extramembraneous catalytic core and F(0) containing the membrane proton channel, linked together by a central stalk and a peripheral stalk. During catalysis, ATP synthesis in the catalytic domain of F(1) is coupled via a rotary mechanism of the central stalk subunits to proton translocation. In terms of biological role, component of the F(0) channel, it forms part of the peripheral stalk, linking F(1) to F(0). The sequence is that of ATP synthase subunit b, chloroplastic from Physcomitrium patens (Spreading-leaved earth moss).